Here is a 567-residue protein sequence, read N- to C-terminus: Malate synthase (567 aa).

The active-site Proton acceptor is the arginine 177. Aspartate 466 (proton donor) is an active-site residue. The Microbody targeting signal motif lies at 565-567 (CKL).

The protein belongs to the malate synthase family.

It is found in the glyoxysome. It catalyses the reaction glyoxylate + acetyl-CoA + H2O = (S)-malate + CoA + H(+). Its pathway is carbohydrate metabolism; glyoxylate cycle; (S)-malate from isocitrate: step 2/2. The chain is Malate synthase from Oryza sativa subsp. japonica (Rice).